A 468-amino-acid chain; its full sequence is ATP synthase subunit beta 2 (468 aa).

Residue 145–152 (GGAGVGKT) participates in ATP binding.

The protein belongs to the ATPase alpha/beta chains family. F-type ATPases have 2 components, CF(1) - the catalytic core - and CF(0) - the membrane proton channel. CF(1) has five subunits: alpha(3), beta(3), gamma(1), delta(1), epsilon(1). CF(0) has three main subunits: a(1), b(2) and c(9-12). The alpha and beta chains form an alternating ring which encloses part of the gamma chain. CF(1) is attached to CF(0) by a central stalk formed by the gamma and epsilon chains, while a peripheral stalk is formed by the delta and b chains.

It localises to the cell membrane. The enzyme catalyses ATP + H2O + 4 H(+)(in) = ADP + phosphate + 5 H(+)(out). Produces ATP from ADP in the presence of a proton gradient across the membrane. The catalytic sites are hosted primarily by the beta subunits. The polypeptide is ATP synthase subunit beta 2 (Mycoplasmopsis pulmonis (strain UAB CTIP) (Mycoplasma pulmonis)).